A 723-amino-acid chain; its full sequence is 1,3-alpha-isomaltosidase (723 aa).

Residue Asp-451 is the Nucleophile of the active site. The active site involves Glu-454. The active-site Proton donor is Asp-516. His-581 lines the substrate pocket.

It belongs to the glycosyl hydrolase 31 family.

It is found in the cytoplasm. The enzyme catalyses cyclobis-(1-&gt;3)-alpha-D-isomaltosyl + 2 H2O = 2 isomaltose. Its function is as follows. Involved in the intracellular degradation of the cyclic tetrasaccharide cyclobis-(1-6)-alpha-nigerosyl (CNN) formed extracellularly from starch. Catalyzes the hydrolysis of the alpha-1,3-glucosidic linkage of cyclobis-(1-6)-alpha-nigerosyl (CNN) to yield isomaltose via a possible linear tetrasaccharide. It has a strong preference for the alpha-(1-3)-isomaltosyl moiety. In Kribbella flavida (strain DSM 17836 / JCM 10339 / NBRC 14399), this protein is 1,3-alpha-isomaltosidase.